Reading from the N-terminus, the 246-residue chain is UDP-2,3-diacylglucosamine hydrolase (246 aa).

Residues D8, H10, D41, N79, and H114 each coordinate Mn(2+). N79–R80 provides a ligand contact to substrate. Substrate contacts are provided by D122, S160, K164, K167, and H195. Residues H195 and H197 each coordinate Mn(2+).

This sequence belongs to the LpxH family. The cofactor is Mn(2+).

The protein resides in the cell inner membrane. The enzyme catalyses UDP-2-N,3-O-bis[(3R)-3-hydroxytetradecanoyl]-alpha-D-glucosamine + H2O = 2-N,3-O-bis[(3R)-3-hydroxytetradecanoyl]-alpha-D-glucosaminyl 1-phosphate + UMP + 2 H(+). It functions in the pathway glycolipid biosynthesis; lipid IV(A) biosynthesis; lipid IV(A) from (3R)-3-hydroxytetradecanoyl-[acyl-carrier-protein] and UDP-N-acetyl-alpha-D-glucosamine: step 4/6. In terms of biological role, hydrolyzes the pyrophosphate bond of UDP-2,3-diacylglucosamine to yield 2,3-diacylglucosamine 1-phosphate (lipid X) and UMP by catalyzing the attack of water at the alpha-P atom. Involved in the biosynthesis of lipid A, a phosphorylated glycolipid that anchors the lipopolysaccharide to the outer membrane of the cell. The sequence is that of UDP-2,3-diacylglucosamine hydrolase from Tolumonas auensis (strain DSM 9187 / NBRC 110442 / TA 4).